A 59-amino-acid chain; its full sequence is UPF0434 protein Shew185_1670 (59 aa).

Belongs to the UPF0434 family.

The sequence is that of UPF0434 protein Shew185_1670 from Shewanella baltica (strain OS185).